Reading from the N-terminus, the 276-residue chain is Diaminopimelate epimerase (276 aa).

Positions 13, 46, and 66 each coordinate substrate. Cys75 serves as the catalytic Proton donor. Substrate is bound by residues 76 to 77, Asn159, Asn192, and 210 to 211; these read GN and ER. Catalysis depends on Cys219, which acts as the Proton acceptor. 220–221 provides a ligand contact to substrate; sequence GT.

It belongs to the diaminopimelate epimerase family. Homodimer.

It is found in the cytoplasm. The catalysed reaction is (2S,6S)-2,6-diaminopimelate = meso-2,6-diaminopimelate. The protein operates within amino-acid biosynthesis; L-lysine biosynthesis via DAP pathway; DL-2,6-diaminopimelate from LL-2,6-diaminopimelate: step 1/1. Catalyzes the stereoinversion of LL-2,6-diaminopimelate (L,L-DAP) to meso-diaminopimelate (meso-DAP), a precursor of L-lysine and an essential component of the bacterial peptidoglycan. The protein is Diaminopimelate epimerase of Stutzerimonas stutzeri (strain A1501) (Pseudomonas stutzeri).